The primary structure comprises 270 residues: Bacterial microcompartment shell protein PduB (270 aa).

2 BMC circularly permuted domains span residues 47 to 152 and 154 to 262; these read EFVG…DRTF and DVYA…GSEP.

The protein belongs to the EutL/PduB family. Homotrimerizes to form a pseudohexamer with a central pore. The trimers pack into an array. Both forms interact with shell protein PduA. Post-translationally, in purified BMCs seen as a 30.0 kDa and 25.0 kDa form; the smaller form is called PduB'.

Its subcellular location is the bacterial microcompartment. It participates in polyol metabolism; 1,2-propanediol degradation. Functionally, the two proteins produced are among the major shell proteins of the bacterial microcompartment (BMC) shell dedicated to 1,2-propanediol (1,2-PD) degradation. Overexpression of the gene gives large amorphous intracellular structures; when only PduB is overexpressed large circular bodies are observed which contain concentric rings, whereas with PduB' overexpression internal bodies with regular straight-lined structures were generated. The N-terminus of the long form (PduB) is required for correct formation of BMCs. May play a major role in binding the enzyme contents to the shell. Its function is as follows. Expression of a cosmid containing the full 21-gene pdu operon in E.coli allows E.coli to grow on 1,2-propanediol (1,2-PD) with the appearance of BMCs in its cytoplasm. In terms of biological role, the 1,2-PD-specific bacterial microcompartment (BMC) concentrates low levels of 1,2-PD catabolic enzymes, concentrates volatile reaction intermediates thus enhancing pathway flux and keeps the level of toxic, mutagenic propionaldehyde low. This chain is Bacterial microcompartment shell protein PduB, found in Citrobacter freundii.